Reading from the N-terminus, the 998-residue chain is Mediator of RNA polymerase II transcription subunit 14 (998 aa).

Belongs to the Mediator complex subunit 14 family. Component of the Mediator complex.

It localises to the nucleus. Its function is as follows. Component of the Mediator complex, a coactivator involved in the regulated transcription of nearly all RNA polymerase II-dependent genes. Mediator functions as a bridge to convey information from gene-specific regulatory proteins to the basal RNA polymerase II transcription machinery. Mediator is recruited to promoters by direct interactions with regulatory proteins and serves as a scaffold for the assembly of a functional preinitiation complex with RNA polymerase II and the general transcription factors. The sequence is that of Mediator of RNA polymerase II transcription subunit 14 (RGR1) from Kluyveromyces lactis (strain ATCC 8585 / CBS 2359 / DSM 70799 / NBRC 1267 / NRRL Y-1140 / WM37) (Yeast).